The sequence spans 288 residues: Phytanoyl-CoA dioxygenase domain-containing protein 1 homolog (288 aa).

Residues Lys-95, Met-134, 149–151, and Trp-167 each bind 2-oxoglutarate; that span reads HVD. His-149 and Asp-151 together coordinate Fe cation. His-242 contributes to the Fe cation binding site. 2-oxoglutarate is bound by residues Ser-244 and Arg-253.

The protein belongs to the PhyH family. PHYHD1 subfamily. Requires Fe cation as cofactor.

Its function is as follows. Has alpha-ketoglutarate-dependent dioxygenase activity. Does not show detectable activity towards fatty acid CoA thioesters. Is not expected to be active with phytanoyl CoA. The protein is Phytanoyl-CoA dioxygenase domain-containing protein 1 homolog of Caenorhabditis briggsae.